We begin with the raw amino-acid sequence, 137 residues long: Ribosomal RNA large subunit methyltransferase H (137 aa).

S-adenosyl-L-methionine-binding positions include L56, G85, and 104–109 (LSPLTL).

It belongs to the RNA methyltransferase RlmH family. In terms of assembly, homodimer.

It is found in the cytoplasm. The catalysed reaction is pseudouridine(1915) in 23S rRNA + S-adenosyl-L-methionine = N(3)-methylpseudouridine(1915) in 23S rRNA + S-adenosyl-L-homocysteine + H(+). Specifically methylates the pseudouridine at position 1915 (m3Psi1915) in 23S rRNA. This chain is Ribosomal RNA large subunit methyltransferase H, found in Thermus thermophilus (strain ATCC BAA-163 / DSM 7039 / HB27).